The following is a 130-amino-acid chain: Ribosome-binding factor A (130 aa).

It belongs to the RbfA family. In terms of assembly, monomer. Binds 30S ribosomal subunits, but not 50S ribosomal subunits or 70S ribosomes.

It localises to the cytoplasm. Functionally, one of several proteins that assist in the late maturation steps of the functional core of the 30S ribosomal subunit. Associates with free 30S ribosomal subunits (but not with 30S subunits that are part of 70S ribosomes or polysomes). Required for efficient processing of 16S rRNA. May interact with the 5'-terminal helix region of 16S rRNA. This is Ribosome-binding factor A from Flavobacterium psychrophilum (strain ATCC 49511 / DSM 21280 / CIP 103535 / JIP02/86).